Reading from the N-terminus, the 692-residue chain is MGTVSSRRSWWPLPLPLLLLLLLGPAGARAQEDEDGDYEELVLALRSEEDGLADAPEHGATATFHRCAKDPWRLPGTYVVVLKEETHRSQSERTARRLQAQAARRGYLTKILHVFHHLLPGFLVKMSGDLLELALKLPHVDYIEEDSSVFAQSIPWNLERITPARYRADEYQPPKGGSLVEVYLLDTSIQSDHREIEGRVMVTDFESVPEEDGTRFHRQASKCDSHGTHLAGVVSGRDAGVAKGAGLRSLRVLNCQGKGTVSGTLIGLEFIRKSQLVQPVGPLVVLLPLAGGYSRVFNAACQRLARAGVVLVTAAGNFRDDACLYSPASAPEVITVGATNAQDQPVTLGTLGTNFGRCVDLFAPGEDIIGASSDCSTCFVSRSGTSQAAAHVAGIAAMMLSAEPELTLAELRQRLIHFSAKDVINEAWFPEDQRVLTPNLVAALPPSTHRAGWQLFCRTVWSAHSGPTRMATAVARCAQDEELLSCSSFSRSGKRRGERIEAQGGKRVCRAHNAFGGEGVYAIARCCLLPQVNCSVHTAPPAGASMGTRVHCHQQGHVLTGCSSHWEVEDLGTHKPPVLRPRGQPNQCVGHREASIHASCCHAPGLECKVKEHGIPAPQEQVIVACEDGWTLTGCSALPGTSHVLGAYAVDNTCVVRSRDVSTTGSTSEEAVAAVAICCRSRHLVQASQELQ.

A signal peptide spans 1 to 30 (MGTVSSRRSWWPLPLPLLLLLLLGPAGARA). A propeptide spanning residues 31 to 152 (QEDEDGDYEE…IEEDSSVFAQ (122 aa)) is cleaved from the precursor. Tyrosine 38 carries the post-translational modification Sulfotyrosine. Position 47 is a phosphoserine (serine 47). The Inhibitor I9 domain maps to 77–149 (TYVVVLKEET…VDYIEEDSSV (73 aa)). The region spanning 155–444 (PWNLERITPA…VLTPNLVAAL (290 aa)) is the Peptidase S8 domain. Catalysis depends on charge relay system residues aspartate 186 and histidine 226. Intrachain disulfides connect cysteine 223–cysteine 255 and cysteine 323–cysteine 358. Serine 386 serves as the catalytic Charge relay system. The interval 450–692 (RAGWQLFCRT…HLVQASQELQ (243 aa)) is C-terminal domain. Cystine bridges form between cysteine 457/cysteine 527, cysteine 477/cysteine 526, and cysteine 486/cysteine 509. Asparagine 533 carries an N-linked (GlcNAc...) asparagine glycan. Intrachain disulfides connect cysteine 534/cysteine 601, cysteine 552/cysteine 600, cysteine 562/cysteine 588, cysteine 608/cysteine 679, cysteine 626/cysteine 678, and cysteine 635/cysteine 654. Serine 688 is modified (phosphoserine).

The protein belongs to the peptidase S8 family. Monomer. Can self-associate to form dimers and higher multimers which may have increased LDLR degrading activity. The precursor protein but not the mature protein may form multimers. Interacts with APOB, VLDLR, LRP8/APOER2 and BACE1. The full-length immature form (pro-PCSK9) interacts with SCNN1A, SCNN1B and SCNN1G. The pro-PCSK9 form (via C-terminal domain) interacts with LDLR. Interacts (via the C-terminal domain) with ANXA2 (via repeat Annexin 1); the interaction inhibits the degradation of LDLR. Ca(2+) serves as cofactor. Cleavage by furin and PCSK5 generates a truncated inactive protein that is unable to induce LDLR degradation. Post-translationally, undergoes autocatalytic cleavage in the endoplasmic reticulum to release the propeptide from the N-terminus and the cleavage of the propeptide is strictly required for its maturation and activation. The cleaved propeptide however remains associated with the catalytic domain through non-covalent interactions, preventing potential substrates from accessing its active site. As a result, it is secreted from cells as a propeptide-containing, enzymatically inactive protein. In terms of processing, phosphorylation protects the propeptide against proteolysis.

Its subcellular location is the cytoplasm. It is found in the secreted. It localises to the endosome. The protein resides in the lysosome. The protein localises to the cell surface. Its subcellular location is the endoplasmic reticulum. It is found in the golgi apparatus. Its activity is regulated as follows. Its proteolytic activity is autoinhibited by the non-covalent binding of the propeptide to the catalytic domain. Inhibited by EGTA. Functionally, crucial player in the regulation of plasma cholesterol homeostasis. Binds to low-density lipid receptor family members: low density lipoprotein receptor (LDLR), very low density lipoprotein receptor (VLDLR), apolipoprotein E receptor (LRP1/APOER) and apolipoprotein receptor 2 (LRP8/APOER2), and promotes their degradation in intracellular acidic compartments. Acts via a non-proteolytic mechanism to enhance the degradation of the hepatic LDLR through a clathrin LDLRAP1/ARH-mediated pathway. May prevent the recycling of LDLR from endosomes to the cell surface or direct it to lysosomes for degradation. Can induce ubiquitination of LDLR leading to its subsequent degradation. Inhibits intracellular degradation of APOB via the autophagosome/lysosome pathway in a LDLR-independent manner. Involved in the disposal of non-acetylated intermediates of BACE1 in the early secretory pathway. Inhibits epithelial Na(+) channel (ENaC)-mediated Na(+) absorption by reducing ENaC surface expression primarily by increasing its proteasomal degradation. Regulates neuronal apoptosis via modulation of LRP8/APOER2 levels and related anti-apoptotic signaling pathways. The sequence is that of Proprotein convertase subtilisin/kexin type 9 (PCSK9) from Macaca nemestrina (Pig-tailed macaque).